The primary structure comprises 264 residues: Acyl-[acyl-carrier-protein]--UDP-N-acetylglucosamine O-acyltransferase (264 aa).

This sequence belongs to the transferase hexapeptide repeat family. LpxA subfamily. In terms of assembly, homotrimer.

It is found in the cytoplasm. It carries out the reaction a (3R)-hydroxyacyl-[ACP] + UDP-N-acetyl-alpha-D-glucosamine = a UDP-3-O-[(3R)-3-hydroxyacyl]-N-acetyl-alpha-D-glucosamine + holo-[ACP]. It functions in the pathway glycolipid biosynthesis; lipid IV(A) biosynthesis; lipid IV(A) from (3R)-3-hydroxytetradecanoyl-[acyl-carrier-protein] and UDP-N-acetyl-alpha-D-glucosamine: step 1/6. Its function is as follows. Involved in the biosynthesis of lipid A, a phosphorylated glycolipid that anchors the lipopolysaccharide to the outer membrane of the cell. This chain is Acyl-[acyl-carrier-protein]--UDP-N-acetylglucosamine O-acyltransferase, found in Chlorobaculum parvum (strain DSM 263 / NCIMB 8327) (Chlorobium vibrioforme subsp. thiosulfatophilum).